Reading from the N-terminus, the 651-residue chain is DNA mismatch repair protein MutL (651 aa).

Residues 383 to 405 (TAAEEPTPAPTSPDLEIGDLDDQ) form a disordered region.

This sequence belongs to the DNA mismatch repair MutL/HexB family.

Functionally, this protein is involved in the repair of mismatches in DNA. It is required for dam-dependent methyl-directed DNA mismatch repair. May act as a 'molecular matchmaker', a protein that promotes the formation of a stable complex between two or more DNA-binding proteins in an ATP-dependent manner without itself being part of a final effector complex. The chain is DNA mismatch repair protein MutL from Lacticaseibacillus casei (strain BL23) (Lactobacillus casei).